A 591-amino-acid polypeptide reads, in one-letter code: CTP synthase (591 aa).

Positions 1 to 281 are amidoligase domain; it reads MPQSRTHSRT…DAYVVRQLGL (281 aa). CTP is bound at residue Ser23. Ser23 contributes to the UTP binding site. ATP-binding positions include 24-29 and Asp81; that span reads SLGKGL. Mg(2+) is bound by residues Asp81 and Glu155. CTP-binding positions include 162 to 164, 202 to 207, and Lys238; these read DIE and KTKPTQ. UTP contacts are provided by residues 202–207 and Lys238; that span reads KTKPTQ. Residues 306-554 enclose the Glutamine amidotransferase type-1 domain; sequence RIALVGKYVD…VDAALKHKLE (249 aa). Position 369 (Gly369) interacts with L-glutamine. The active-site Nucleophile; for glutamine hydrolysis is Cys396. L-glutamine contacts are provided by residues 397–400, Glu419, and Arg480; that span reads LGLQ. Catalysis depends on residues His527 and Glu529. Residues 568-591 form a disordered region; the sequence is AVATDDELADSADRDEVASVDSAG.

The protein belongs to the CTP synthase family. As to quaternary structure, homotetramer.

The catalysed reaction is UTP + L-glutamine + ATP + H2O = CTP + L-glutamate + ADP + phosphate + 2 H(+). The enzyme catalyses L-glutamine + H2O = L-glutamate + NH4(+). It carries out the reaction UTP + NH4(+) + ATP = CTP + ADP + phosphate + 2 H(+). Its pathway is pyrimidine metabolism; CTP biosynthesis via de novo pathway; CTP from UDP: step 2/2. Its activity is regulated as follows. Allosterically activated by GTP, when glutamine is the substrate; GTP has no effect on the reaction when ammonia is the substrate. The allosteric effector GTP functions by stabilizing the protein conformation that binds the tetrahedral intermediate(s) formed during glutamine hydrolysis. Inhibited by the product CTP, via allosteric rather than competitive inhibition. Its function is as follows. Catalyzes the ATP-dependent amination of UTP to CTP with either L-glutamine or ammonia as the source of nitrogen. Regulates intracellular CTP levels through interactions with the four ribonucleotide triphosphates. In Rhodococcus jostii (strain RHA1), this protein is CTP synthase.